We begin with the raw amino-acid sequence, 156 residues long: Transcriptional repressor NrdR (156 aa).

A zinc finger lies at 3 to 34; sequence CPKCNSTQSKVVDSRHADELNAIRRRRECENC. The region spanning 49–139 is the ATP-cone domain; sequence LIVVKKDGTR…VYKEFKDVDQ (91 aa).

Belongs to the NrdR family. Zn(2+) is required as a cofactor.

Its function is as follows. Negatively regulates transcription of bacterial ribonucleotide reductase nrd genes and operons by binding to NrdR-boxes. The polypeptide is Transcriptional repressor NrdR (Staphylococcus aureus (strain NCTC 8325 / PS 47)).